A 210-amino-acid chain; its full sequence is Large ribosomal subunit protein uL4 (210 aa).

Over residues 41–51 the composition is skewed to polar residues; it reads QNNARQGNASA. The tract at residues 41–77 is disordered; it reads QNNARQGNASAKTRAEVRGGGRKPWKQKGTGRARAGS. The segment covering 60-71 has biased composition (basic residues); sequence GGRKPWKQKGTG.

It belongs to the universal ribosomal protein uL4 family. Part of the 50S ribosomal subunit.

Its function is as follows. One of the primary rRNA binding proteins, this protein initially binds near the 5'-end of the 23S rRNA. It is important during the early stages of 50S assembly. It makes multiple contacts with different domains of the 23S rRNA in the assembled 50S subunit and ribosome. Functionally, forms part of the polypeptide exit tunnel. The polypeptide is Large ribosomal subunit protein uL4 (Synechocystis sp. (strain ATCC 27184 / PCC 6803 / Kazusa)).